The chain runs to 127 residues: Thioredoxin (127 aa).

Residues serine 2–arginine 115 enclose the Thioredoxin domain. Residues cysteine 33 and cysteine 36 each act as nucleophile in the active site. Cysteine 33 and cysteine 36 are disulfide-bonded.

This sequence belongs to the thioredoxin family.

Its function is as follows. Participates in various redox reactions through the reversible oxidation of its active center dithiol to a disulfide and catalyzes dithiol-disulfide exchange reactions. The polypeptide is Thioredoxin (trx) (Neurospora crassa (strain ATCC 24698 / 74-OR23-1A / CBS 708.71 / DSM 1257 / FGSC 987)).